Reading from the N-terminus, the 251-residue chain is 1-(5-phosphoribosyl)-5-[(5-phosphoribosylamino)methylideneamino] imidazole-4-carboxamide isomerase (251 aa).

Catalysis depends on aspartate 8, which acts as the Proton acceptor. Aspartate 131 acts as the Proton donor in catalysis.

It belongs to the HisA/HisF family.

The protein resides in the cytoplasm. The catalysed reaction is 1-(5-phospho-beta-D-ribosyl)-5-[(5-phospho-beta-D-ribosylamino)methylideneamino]imidazole-4-carboxamide = 5-[(5-phospho-1-deoxy-D-ribulos-1-ylimino)methylamino]-1-(5-phospho-beta-D-ribosyl)imidazole-4-carboxamide. Its pathway is amino-acid biosynthesis; L-histidine biosynthesis; L-histidine from 5-phospho-alpha-D-ribose 1-diphosphate: step 4/9. The polypeptide is 1-(5-phosphoribosyl)-5-[(5-phosphoribosylamino)methylideneamino] imidazole-4-carboxamide isomerase (Burkholderia lata (strain ATCC 17760 / DSM 23089 / LMG 22485 / NCIMB 9086 / R18194 / 383)).